The sequence spans 488 residues: UDP-N-acetylmuramate--L-alanine ligase (488 aa).

127-133 provides a ligand contact to ATP; sequence GTHGKTT.

The protein belongs to the MurCDEF family.

It localises to the cytoplasm. The enzyme catalyses UDP-N-acetyl-alpha-D-muramate + L-alanine + ATP = UDP-N-acetyl-alpha-D-muramoyl-L-alanine + ADP + phosphate + H(+). It participates in cell wall biogenesis; peptidoglycan biosynthesis. Cell wall formation. This chain is UDP-N-acetylmuramate--L-alanine ligase, found in Shewanella sp. (strain MR-4).